The sequence spans 378 residues: Chaperone protein DnaJ (378 aa).

In terms of domain architecture, J spans 6-70; that stretch reads DYYDVLGVSR…QKRQQYDQFG (65 aa). Residues 137 to 219 form a CR-type zinc finger; that stretch reads GKTSEISYSR…CHGKGVKTQK (83 aa). Zn(2+) is bound by residues Cys-150, Cys-153, Cys-167, Cys-170, Cys-193, Cys-196, Cys-207, and Cys-210. CXXCXGXG motif repeat units follow at residues 150–157, 167–174, 193–200, and 207–214; these read CEVCKGSG, CDKCGGSG, CDKCAGSG, and CHNCHGKG.

The protein belongs to the DnaJ family. As to quaternary structure, homodimer. The cofactor is Zn(2+).

It localises to the cytoplasm. In terms of biological role, participates actively in the response to hyperosmotic and heat shock by preventing the aggregation of stress-denatured proteins and by disaggregating proteins, also in an autonomous, DnaK-independent fashion. Unfolded proteins bind initially to DnaJ; upon interaction with the DnaJ-bound protein, DnaK hydrolyzes its bound ATP, resulting in the formation of a stable complex. GrpE releases ADP from DnaK; ATP binding to DnaK triggers the release of the substrate protein, thus completing the reaction cycle. Several rounds of ATP-dependent interactions between DnaJ, DnaK and GrpE are required for fully efficient folding. Also involved, together with DnaK and GrpE, in the DNA replication of plasmids through activation of initiation proteins. The sequence is that of Chaperone protein DnaJ from Lactobacillus delbrueckii subsp. bulgaricus (strain ATCC BAA-365 / Lb-18).